The following is a 268-amino-acid chain: MIIMGRGKIEVKRIENKTSRQVTFSKRRAGLLKKTHELSVLCDAQIGLIIFSSKGKLFEYCSQPHSMSQIISRYLQTTGASLPVEDNRVQLYDEVAKMRRDTLNLQLSLQRYKGDDLSLAQYEELNELEKQLEHALNKIRARKLELMQQQMENLKKTEKMLEKENHDMYQWLMNNQMYKQESAAMDHEDHHHHHEHQQAITELNLLGEQPLLSHFTFFGDQEQPSTSTVNHFASISLTSPPANSISPYRLQPSHPNLQDSHVHGPSYD.

One can recognise an MADS-box domain in the interval 4–64 (MGRGKIEVKR…GKLFEYCSQP (61 aa)). Residues 88–178 (RVQLYDEVAK…YQWLMNNQMY (91 aa)) form the K-box domain. The segment at 243–268 (NSISPYRLQPSHPNLQDSHVHGPSYD) is disordered.

The protein resides in the nucleus. Its function is as follows. Probable transcription factor. The sequence is that of MADS-box protein FBP24 (FBP24) from Petunia hybrida (Petunia).